The primary structure comprises 1082 residues: Transcription elongation factor SPT5 (1082 aa).

The span at 1–28 shows a compositional bias: acidic residues; sequence MSDSEDSNFSEEEDSERSSEAEEAEVEE. Positions 1 to 88 are disordered; it reads MSDSEDSNFS…DVDDEYEDED (88 aa). A phosphoserine mark is found at Ser32 and Ser36. Composition is skewed to acidic residues over residues 38–62 and 76–88; these read KEEE…EDDD and DEAD…EDED. Residue Lys141 forms a Glycyl lysine isopeptide (Lys-Gly) (interchain with G-Cter in SUMO2) linkage. The tract at residues 174–268 is interaction with SUPT4H1 and SUPT4H2; that stretch reads DPNLWTVKCK…TDVLKVVKEV (95 aa). In terms of domain architecture, KOW 1 spans 271-304; the sequence is LKPKSWVRLKRGIYKDDIAQVDYVEPSQNTISLK. Residues 311–418 form an interaction with RNA polymerase II region; sequence YDRIKARMSL…STGKEREHNF (108 aa). A UBR5-degron motif is present at residues 326–332; that stretch reads KRKKFKR. KOW domains are found at residues 418 to 449 and 470 to 501; these read FQPG…ITIM and FKMG…VILF. An RNA-binding site is contributed by Lys577. The KOW 4 domain occupies 592-625; the sequence is IHVKDIVKVIDGPHSGREGEIRHLYRSFAFLHCK. Arg617 contacts DNA. Phosphothreonine is present on Thr661. A phosphoserine mark is found at Ser664 and Ser684. The disordered stretch occupies residues 669–694; the sequence is SPMHPSAEGQHGGFGSPGGMSRGRGR. Positions 678–690 are enriched in gly residues; sequence QHGGFGSPGGMSR. An asymmetric dimethylarginine; alternate mark is found at Arg690 and Arg692. Residues Arg690 and Arg692 each carry the omega-N-methylarginine; alternate modification. Arg692 bears the Symmetric dimethylarginine; alternate mark. One can recognise a KOW 5 domain in the interval 698 to 731; sequence ELIGQTVRISQGPYKGYIGVVKDATESTARVELH. Lys712 carries the post-translational modification N6-acetyllysine. Residues 741–801 are compositionally biased toward polar residues; it reads RQRLTTVDSQ…RTPHYGSQTP (61 aa). Residues 741–972 form a disordered region; it reads RQRLTTVDSQ…GSGIEQNSSD (232 aa). The stretch at 748–753 is one CTR1-1; approximate repeat; it reads DSQRPG. The 9 X 7 AA approximate tandem repeats of G-S-[QR]-T-P-X-[YQ], motif CTR1 stretch occupies residues 748–811; the sequence is DSQRPGGMTS…LHDGSRTPAQ (64 aa). The stretch at 754 to 759 is one CTR1-2 repeat; it reads GMTSTY. The CTR1-3 repeat unit spans residues 760–765; that stretch reads GRTPMY. The stretch at 766-772 is one CTR1-4 repeat; it reads GSQTPMY. 2 positions are modified to phosphothreonine; by CDK9: Thr769 and Thr778. A CTR1-5 repeat occupies 775–781; that stretch reads GSRTPMY. The stretch at 782–788 is one CTR1-6 repeat; the sequence is GSQTPLQ. Ser783 is subject to Phosphoserine. Phosphothreonine occurs at positions 785 and 793. One copy of the CTR1-7 repeat lies at 790 to 796; it reads GSRTPHY. Residues 797-803 form a CTR1-8 repeat; the sequence is GSQTPLH. Ser798 carries the post-translational modification Phosphoserine. A phosphothreonine mark is found at Thr800 and Thr808. A CTR1-9 repeat occupies 805–811; it reads GSRTPAQ. Residues 828–838 show a composition bias toward acidic residues; sequence EEYEYAFDDEP. A CTR2-1 repeat occupies 838-845; that stretch reads PTPSPQAY. Residues 838–944 form a 10 X 8 AA approximate tandem repeats of P-[TS]-P-S-P-[QA]-[SG]-Y, motif CTR2 region; sequence PTPSPQAYGG…ASPSPSPVGY (107 aa). A CTR2-2; approximate repeat occupies 848–856; sequence TPNPQTPGY. Positions 851–860 are enriched in pro residues; the sequence is PQTPGYPDPS. Residues 857–863 form a CTR2-3; approximate repeat; that stretch reads PDPSSPQ. Over residues 861-884 the composition is skewed to polar residues; sequence SPQVNPQYNPQTPGTPAMYNTDQF. One copy of the CTR2-4; half-length repeat lies at 875–879; it reads TPAMY. Residues 890 to 896 form a CTR2-5; approximate repeat; sequence PSPQGSY. Residues 890–905 show a composition bias toward low complexity; it reads PSPQGSYQPSPSPQSY. The CTR2-6 repeat unit spans residues 898-905; that stretch reads PSPSPQSY. One copy of the CTR2-7; approximate repeat lies at 910–915; that stretch reads PSPAGY. A CTR2-8 repeat occupies 918-924; that stretch reads THSPASY. The stretch at 926–933 is one CTR2-9 repeat; it reads PTPSPMAY. The stretch at 937 to 944 is one CTR2-10 repeat; sequence PSPSPVGY. At Thr1028 the chain carries Phosphothreonine. A Glycyl lysine isopeptide (Lys-Gly) (interchain with G-Cter in SUMO2) cross-link involves residue Lys1031.

This sequence belongs to the SPT5 family. Interacts with SUPT4H1 to form DSIF. DSIF interacts with the positive transcription elongation factor b complex (P-TEFb complex), which is composed of CDK9 and cyclin-T (CCNT1 or CCNT2). DSIF interacts with RNA polymerase II, and this interaction is reduced by phosphorylation of the C-terminal domain (CTD) of POLR2A by P-TEFb. DSIF also interacts with the NELF complex, which is composed of NELFA, NELFB, NELFD and NELFE, and this interaction occurs following prior binding of DSIF to RNA polymerase II. Also interacts with PRMT1/HRMT1L2, HTATSF1/TATSF1, RNGTT/CAP1A, PRMT5/SKB1, SUPT6H, and can interact with PIN1. Component of a complex which is at least composed of HTATSF1/Tat-SF1, the P-TEFb complex components CDK9 and CCNT1, RNA polymerase II, SUPT5H, and NCL/nucleolin. Interacts with MCM3AP. Methylated by PRMT1/HRMT1L2 and PRMT5/SKB1. Methylation negatively regulates interaction with P-TEFb and RNA polymerase II. In terms of processing, phosphorylated by CDK7 and CDK9. Phosphorylation by P-TEFb (CDK9) at Thr residues of the C-terminal repeats alleviates transcriptional pausing and promotes transcription elongation. Dephosphorylated by the INTAC complex when transcripts are unfavorably configured for transcriptional elongation, leading to premature transcription termination: dephosphorylation is mediated by the PPP2CA component of the INTAC complex. Dephosphorylated by the PNUTS-PP1 complex in termination zones downstream of poly(A) sites, thereby promoting deceleration of RNA polymerase II transcription. Dephosphorylated by the PNUTS-PP1 complex in termination zones downstream of poly(A) sites, thereby promoting deceleration of RNA polymerase II transcription. Phosphorylation may also stimulate interaction with PIN1. Bulk phosphorylation occurs predominantly in mitosis. Post-translationally, ubiquitinated by UBR5 when not assembled in the DSIF complex, leading to its degradation: UBR5 recognizes and binds a degron that is not accessible when SUPT5H is part of the DSIF complex.

It is found in the nucleus. In terms of biological role, component of the DRB sensitivity-inducing factor complex (DSIF complex), which regulates mRNA processing and transcription elongation by RNA polymerase II. DSIF positively regulates mRNA capping by stimulating the mRNA guanylyltransferase activity of RNGTT/CAP1A. DSIF also acts cooperatively with the negative elongation factor complex (NELF complex) to enhance transcriptional pausing at sites proximal to the promoter. Transcriptional pausing may facilitate the assembly of an elongation competent RNA polymerase II complex. DSIF and NELF promote pausing by inhibition of the transcription elongation factor TFIIS/S-II. TFIIS/S-II binds to RNA polymerase II at transcription pause sites and stimulates the weak intrinsic nuclease activity of the enzyme. Cleavage of blocked transcripts by RNA polymerase II promotes the resumption of transcription from the new 3' terminus and may allow repeated attempts at transcription through natural pause sites. Following phosphorylation by CDK9, DSIF can also positively regulate transcriptional elongation. The sequence is that of Transcription elongation factor SPT5 (Supt5h) from Mus musculus (Mouse).